A 33-amino-acid polypeptide reads, in one-letter code: Protein YdgV (33 aa).

This is Protein YdgV from Escherichia coli (strain K12).